Reading from the N-terminus, the 206-residue chain is MAEVEAAPIAAAETPEVAAAEGAAAAKAPHKLHRQWAFWYDIQSKPKPGAAWGTSLRKAYTFDTVEEFWGLYDQIFRPSKVTVNADFHLFKAGVEPKWEDPECANGGKWTVPCSRKTTLENMWLETLMALIGEQFDESEEICGVVASVRQRGDKLALWTRTASNEAVQVNIGKKWKEIVDYNDKMVYSFHDDAKREKPSRGGRYNV.

Residues Cys-103 and Cys-142 are joined by a disulfide bond.

It belongs to the eukaryotic initiation factor 4E family. As to quaternary structure, EIF4F is a multi-subunit complex, the composition of which varies with external and internal environmental conditions. It is composed of at least EIF4A, EIF4E and EIF4G. EIF4E is also known to interact with other partners. In higher plants two isoforms of EIF4F have been identified, named isoform EIF4F and isoform EIF(iso)4F. Isoform EIF4F has subunits p220 and p26, whereas isoform EIF(iso)4F has subunits p82 and p28. Post-translationally, according to the redox status, the Cys-103-Cys-142 disulfide bridge may have a role in regulating protein function by affecting its ability to bind capped mRNA.

Its function is as follows. Recognizes and binds the 7-methylguanosine-containing mRNA cap during an early step in the initiation of protein synthesis and facilitates ribosome binding by inducing the unwinding of the mRNAs secondary structures. The polypeptide is Eukaryotic translation initiation factor isoform 4E-2 (Oryza sativa subsp. japonica (Rice)).